Reading from the N-terminus, the 164-residue chain is Putative 4-hydroxy-4-methyl-2-oxoglutarate aldolase (164 aa).

Substrate is bound by residues 80–83 and Arg-102; that span reads GGNL. Residue Asp-103 coordinates a divalent metal cation.

Belongs to the class II aldolase/RraA-like family. In terms of assembly, homotrimer. It depends on a divalent metal cation as a cofactor.

The catalysed reaction is 4-hydroxy-4-methyl-2-oxoglutarate = 2 pyruvate. The enzyme catalyses oxaloacetate + H(+) = pyruvate + CO2. Functionally, catalyzes the aldol cleavage of 4-hydroxy-4-methyl-2-oxoglutarate (HMG) into 2 molecules of pyruvate. Also contains a secondary oxaloacetate (OAA) decarboxylase activity due to the common pyruvate enolate transition state formed following C-C bond cleavage in the retro-aldol and decarboxylation reactions. In Paraburkholderia phytofirmans (strain DSM 17436 / LMG 22146 / PsJN) (Burkholderia phytofirmans), this protein is Putative 4-hydroxy-4-methyl-2-oxoglutarate aldolase.